Consider the following 1483-residue polypeptide: Ubiquitin fusion degradation protein 4 (1483 aa).

The disordered stretch occupies residues 1–117 (MSENNSHNLD…NNEFGSNPLH (117 aa)). The segment covering 8–18 (NLDEHESHSEN) has biased composition (basic and acidic residues). Acidic residues predominate over residues 61 to 70 (EADDGEDDDN). Threonine 87 is subject to Phosphothreonine. A Glycyl lysine isopeptide (Lys-Gly) (interchain with G-Cter in ubiquitin) cross-link involves residue lysine 349. Positions 1007 to 1081 (CGVKSDSFIN…LIQLWKNKSK (75 aa)) are K-box. The HECT domain occupies 1376 to 1483 (AEHGYTMDSS…EEGAGAFLLS (108 aa)). Residue cysteine 1450 is the Glycyl thioester intermediate of the active site.

Belongs to the UPL family. K-HECT subfamily.

The catalysed reaction is S-ubiquitinyl-[E2 ubiquitin-conjugating enzyme]-L-cysteine + [acceptor protein]-L-lysine = [E2 ubiquitin-conjugating enzyme]-L-cysteine + N(6)-ubiquitinyl-[acceptor protein]-L-lysine.. In terms of biological role, E3 ubiquitin-protein ligase which accepts ubiquitin from an E2 ubiquitin-conjugating enzyme in the form of a thioester and then directly transfers the ubiquitin to targeted substrates. The protein is Ubiquitin fusion degradation protein 4 (UFD4) of Saccharomyces cerevisiae (strain ATCC 204508 / S288c) (Baker's yeast).